The following is an 828-amino-acid chain: Periplasmic nitrate reductase (828 aa).

Residues 1–31 (MKLSRRSFMKANAVAAAAAAAGLSVPGVARA) constitute a signal peptide (tat-type signal). The 57-residue stretch at 39 to 95 (IKWDKAPCRFCGTGCGVLVGTQQGRVVACQGDPDAPVNRGLNCIKGYFLPKIMYGKD) folds into the 4Fe-4S Mo/W bis-MGD-type domain. Residues Cys46, Cys49, Cys53, and Cys81 each coordinate [4Fe-4S] cluster. Mo-bis(molybdopterin guanine dinucleotide)-binding positions include Lys83, Gln150, Asn175, Cys179, 212-219 (WGSNMAEM), 243-247 (STFQH), 262-264 (QSD), Met372, Gln376, Asn482, 508-509 (SD), Lys531, Asp558, and 718-727 (TGRVLEHWHT). Phe794 contributes to the substrate binding site. Residues Asn802 and Lys819 each contribute to the Mo-bis(molybdopterin guanine dinucleotide) site.

The protein belongs to the prokaryotic molybdopterin-containing oxidoreductase family. NasA/NapA/NarB subfamily. As to quaternary structure, component of the periplasmic nitrate reductase NapAB complex composed of NapA and NapB. [4Fe-4S] cluster serves as cofactor. It depends on Mo-bis(molybdopterin guanine dinucleotide) as a cofactor. Post-translationally, predicted to be exported by the Tat system. The position of the signal peptide cleavage has not been experimentally proven.

It localises to the periplasm. The catalysed reaction is 2 Fe(II)-[cytochrome] + nitrate + 2 H(+) = 2 Fe(III)-[cytochrome] + nitrite + H2O. In terms of biological role, catalytic subunit of the periplasmic nitrate reductase complex NapAB. Receives electrons from NapB and catalyzes the reduction of nitrate to nitrite. The chain is Periplasmic nitrate reductase from Salmonella arizonae (strain ATCC BAA-731 / CDC346-86 / RSK2980).